A 545-amino-acid polypeptide reads, in one-letter code: CTP synthase (545 aa).

The amidoligase domain stretch occupies residues 1–266 (MTTRYIFVTG…DDLVVKRFGL (266 aa)). Ser-14 is a binding site for CTP. Ser-14 is a binding site for UTP. ATP contacts are provided by residues 15–20 (SLGKGI) and Asp-72. Mg(2+)-binding residues include Asp-72 and Glu-140. CTP is bound by residues 147-149 (DIE), 187-192 (KTKPTQ), and Lys-223. UTP-binding positions include 187 to 192 (KTKPTQ) and Lys-223. Position 239 to 241 (239 to 241 (KDV)) interacts with ATP. In terms of domain architecture, Glutamine amidotransferase type-1 spans 291 to 542 (VIGMVGKYIE…IAAASAHQKR (252 aa)). L-glutamine is bound at residue Gly-352. Catalysis depends on Cys-379, which acts as the Nucleophile; for glutamine hydrolysis. Residues 380–383 (LGMQ), Glu-403, and Arg-470 each bind L-glutamine. Active-site residues include His-515 and Glu-517.

It belongs to the CTP synthase family. Homotetramer.

It catalyses the reaction UTP + L-glutamine + ATP + H2O = CTP + L-glutamate + ADP + phosphate + 2 H(+). The enzyme catalyses L-glutamine + H2O = L-glutamate + NH4(+). It carries out the reaction UTP + NH4(+) + ATP = CTP + ADP + phosphate + 2 H(+). It participates in pyrimidine metabolism; CTP biosynthesis via de novo pathway; CTP from UDP: step 2/2. Its activity is regulated as follows. Allosterically activated by GTP, when glutamine is the substrate; GTP has no effect on the reaction when ammonia is the substrate. The allosteric effector GTP functions by stabilizing the protein conformation that binds the tetrahedral intermediate(s) formed during glutamine hydrolysis. Inhibited by the product CTP, via allosteric rather than competitive inhibition. Functionally, catalyzes the ATP-dependent amination of UTP to CTP with either L-glutamine or ammonia as the source of nitrogen. Regulates intracellular CTP levels through interactions with the four ribonucleotide triphosphates. This chain is CTP synthase, found in Shewanella putrefaciens (strain CN-32 / ATCC BAA-453).